A 458-amino-acid chain; its full sequence is uncharacterized protein (458 aa).

Disordered regions lie at residues 339–397 and 434–458; these read GTGY…ARIL and YNSE…EDDC. Composition is skewed to acidic residues over residues 344–390 and 436–458; these read SDSD…EEEP and SEDE…EDDC.

This is an uncharacterized protein from Invertebrate iridescent virus 3 (IIV-3).